A 473-amino-acid polypeptide reads, in one-letter code: Anthocyanidin 5,3-O-glucosyltransferase (473 aa).

This sequence belongs to the UDP-glycosyltransferase family.

It functions in the pathway pigment biosynthesis; anthocyanin biosynthesis. In terms of biological role, sequentially catalyzes two glycosylation steps at the 5-OH and 3-OH positions of anthocyanidin. Unglycosylated anthocyanidin or anthocyanidin 5-O-glucoside, but not anthocyanidin 3-O-glucoside, can be used as glucosyl acceptor. The polypeptide is Anthocyanidin 5,3-O-glucosyltransferase (RhGT1) (Rosa hybrid cultivar).